The sequence spans 382 residues: Mannitol-1-phosphate 5-dehydrogenase (382 aa).

An NAD(+)-binding site is contributed by 3-14; sequence ALHFGAGNIGRG. Lysine 269 bears the N6-acetyllysine mark.

This sequence belongs to the mannitol dehydrogenase family.

The catalysed reaction is D-mannitol 1-phosphate + NAD(+) = beta-D-fructose 6-phosphate + NADH + H(+). The chain is Mannitol-1-phosphate 5-dehydrogenase from Escherichia coli O45:K1 (strain S88 / ExPEC).